The primary structure comprises 43 residues: Cytochrome b559 subunit beta (43 aa).

The chain crosses the membrane as a helical span at residues 18–34 (WLAVHTLAIPTVFFLGA). H22 lines the heme pocket.

It belongs to the PsbE/PsbF family. Heterodimer of an alpha subunit and a beta subunit. PSII is composed of 1 copy each of membrane proteins PsbA, PsbB, PsbC, PsbD, PsbE, PsbF, PsbH, PsbI, PsbJ, PsbK, PsbL, PsbM, PsbT, PsbX, PsbY, PsbZ, Psb30/Ycf12, peripheral proteins PsbO, CyanoQ (PsbQ), PsbU, PsbV and a large number of cofactors. It forms dimeric complexes. Heme b serves as cofactor.

It localises to the cellular thylakoid membrane. This b-type cytochrome is tightly associated with the reaction center of photosystem II (PSII). PSII is a light-driven water:plastoquinone oxidoreductase that uses light energy to abstract electrons from H(2)O, generating O(2) and a proton gradient subsequently used for ATP formation. It consists of a core antenna complex that captures photons, and an electron transfer chain that converts photonic excitation into a charge separation. The polypeptide is Cytochrome b559 subunit beta (Synechococcus sp. (strain JA-2-3B'a(2-13)) (Cyanobacteria bacterium Yellowstone B-Prime)).